Reading from the N-terminus, the 71-residue chain is Large ribosomal subunit protein uL29 (71 aa).

This sequence belongs to the universal ribosomal protein uL29 family.

In Rickettsia typhi (strain ATCC VR-144 / Wilmington), this protein is Large ribosomal subunit protein uL29.